Consider the following 294-residue polypeptide: Ribosomal RNA small subunit methyltransferase H (294 aa).

S-adenosyl-L-methionine-binding positions include 31 to 33 (GGY), aspartate 49, phenylalanine 76, aspartate 97, and glutamine 104.

Belongs to the methyltransferase superfamily. RsmH family.

It localises to the cytoplasm. It catalyses the reaction cytidine(1402) in 16S rRNA + S-adenosyl-L-methionine = N(4)-methylcytidine(1402) in 16S rRNA + S-adenosyl-L-homocysteine + H(+). In terms of biological role, specifically methylates the N4 position of cytidine in position 1402 (C1402) of 16S rRNA. This chain is Ribosomal RNA small subunit methyltransferase H, found in Wolbachia pipientis subsp. Culex pipiens (strain wPip).